We begin with the raw amino-acid sequence, 239 residues long: Probable 2-phosphosulfolactate phosphatase (239 aa).

This sequence belongs to the ComB family. The cofactor is Mg(2+).

It catalyses the reaction (2R)-O-phospho-3-sulfolactate + H2O = (2R)-3-sulfolactate + phosphate. This chain is Probable 2-phosphosulfolactate phosphatase, found in Clostridium botulinum (strain 657 / Type Ba4).